The sequence spans 432 residues: Enolase (432 aa).

Gln164 provides a ligand contact to (2R)-2-phosphoglycerate. Catalysis depends on Glu206, which acts as the Proton donor. Mg(2+) contacts are provided by Asp243, Glu284, and Asp311. Positions 336, 365, 366, and 387 each coordinate (2R)-2-phosphoglycerate. Residue Lys336 is the Proton acceptor of the active site.

It belongs to the enolase family. The cofactor is Mg(2+).

Its subcellular location is the cytoplasm. It is found in the secreted. It localises to the cell surface. The enzyme catalyses (2R)-2-phosphoglycerate = phosphoenolpyruvate + H2O. Its pathway is carbohydrate degradation; glycolysis; pyruvate from D-glyceraldehyde 3-phosphate: step 4/5. Catalyzes the reversible conversion of 2-phosphoglycerate (2-PG) into phosphoenolpyruvate (PEP). It is essential for the degradation of carbohydrates via glycolysis. This chain is Enolase, found in Synechococcus sp. (strain JA-3-3Ab) (Cyanobacteria bacterium Yellowstone A-Prime).